The following is a 147-amino-acid chain: Globin (147 aa).

Position 2 is an N-acetylserine (S2). The region spanning 2 to 147 (SLSAAEADLA…IIDALKAAGK (146 aa)) is the Globin domain. H96 contributes to the heme b binding site.

This sequence belongs to the globin family. As to quaternary structure, monomer.

In Aplysia limacina (Sea hare), this protein is Globin.